The primary structure comprises 335 residues: Serpentine receptor class alpha-13 (335 aa).

Over 1 to 22 (MAIVSSENRTCADEKLLALYQS) the chain is Extracellular. The chain crosses the membrane as a helical span at residues 23–43 (WSYIASIVFNCLVPTISTYFL). The Cytoplasmic segment spans residues 44 to 61 (GRAIFQLCNQATIQYSTR). The chain crosses the membrane as a helical span at residues 62 to 82 (ILLIATILFAACHQVSYFAFK). Residues 83 to 107 (IDLLHTMFFKLDQPCFLQRSSYDCR) lie on the Extracellular side of the membrane. Residues 108-128 (FISIAQTTGVVGMALTGLAMS) traverse the membrane as a helical segment. Residues 129-149 (TDRALALTFPADYHKLKSVPR) are Cytoplasmic-facing. The helical transmembrane segment at 150–170 (VVLSVFVFIVSFSTWFLLTMN) threads the bilayer. The Extracellular portion of the chain corresponds to 171–192 (DPLTGYLNHCGFYPSYSVANFQ). The chain crosses the membrane as a helical span at residues 193–213 (LMLDVILYLAIFNLIWDVILF). Topologically, residues 214–235 (YYARQQILWRRSYQFQKRYEAR) are cytoplasmic. The chain crosses the membrane as a helical span at residues 236–255 (ISLNCTQAVFVISICQCISN). The Extracellular portion of the chain corresponds to 256–278 (GANSGLMRLLMMIGTSITSVTYS). A helical transmembrane segment spans residues 279–299 (SLLSLFYTAPYSCILLPILMM). The Cytoplasmic portion of the chain corresponds to 300–335 (RISEYIREQRTIGILSLRSEKPGLEEHHQRMRAAWS).

The protein belongs to the nematode receptor-like protein sra family.

The protein localises to the membrane. Functionally, chemosensory receptor that negatively regulates RAS/MAPK signaling during vulva induction and the negative regulation of olfaction of volitile attractants. Required for the suppression of vulval induction in response to food starvation. Signaling acts through the GPA-5 G-alpha protein subunit. This Caenorhabditis briggsae protein is Serpentine receptor class alpha-13.